A 381-amino-acid polypeptide reads, in one-letter code: Tryptophan--tRNA ligase (381 aa).

A 'HIGH' region motif is present at residues 82-90 (PSLGMHIGH). Positions 254-258 (KMSSS) match the 'KMSKS' region motif.

This sequence belongs to the class-I aminoacyl-tRNA synthetase family.

Its subcellular location is the cytoplasm. The enzyme catalyses tRNA(Trp) + L-tryptophan + ATP = L-tryptophyl-tRNA(Trp) + AMP + diphosphate + H(+). This is Tryptophan--tRNA ligase from Sulfurisphaera tokodaii (strain DSM 16993 / JCM 10545 / NBRC 100140 / 7) (Sulfolobus tokodaii).